The sequence spans 239 residues: Glycerol-3-phosphate acyltransferase (239 aa).

The next 6 membrane-spanning stretches (helical) occupy residues 6-26 (AIALLIVFSLVIGYLMGSVMF), 61-81 (FLVGLCDALKGFLAFVFSFLI), 99-119 (YYLTYLSCFAATIGHIFPLYF), 135-155 (LAISLWWFVICLVLWLLVTLI), 159-179 (VSLASLVTFFILAIIILVPWL), and 199-219 (WYIILFFVLWYWPLTIAVFWL).

This sequence belongs to the PlsY family. Probably interacts with PlsX.

It localises to the cell membrane. The catalysed reaction is an acyl phosphate + sn-glycerol 3-phosphate = a 1-acyl-sn-glycero-3-phosphate + phosphate. Its pathway is lipid metabolism; phospholipid metabolism. Catalyzes the transfer of an acyl group from acyl-phosphate (acyl-PO(4)) to glycerol-3-phosphate (G3P) to form lysophosphatidic acid (LPA). This enzyme utilizes acyl-phosphate as fatty acyl donor, but not acyl-CoA or acyl-ACP. This is Glycerol-3-phosphate acyltransferase from Mycoplasma pneumoniae (strain ATCC 29342 / M129 / Subtype 1) (Mycoplasmoides pneumoniae).